We begin with the raw amino-acid sequence, 236 residues long: NAP1-binding protein 2 (236 aa).

Ser-102 is subject to Phosphoserine. In terms of domain architecture, SH3 spans 110–171 (IVNQRAVALY…PEEFVSYIQP (62 aa)). 2 positions are modified to phosphoserine: Ser-196 and Ser-235.

Interacts with PBS2 and PTC1.

Its subcellular location is the cytoplasm. Negatively regulates the high-osmolarity glycerol (HOG) pathway through its negative regulation of the HOG1 kinase activity. Mediates the binding between the PTC1 phosphatase and the PBS2 MAP/ERK kinase (MEK). With PTC1, regulates endoplasmic reticulum inheritance through the cell wall integrity (CWI) MAPK pathway by modulating the MAPK, SLT2. This chain is NAP1-binding protein 2 (NBP2), found in Saccharomyces cerevisiae (strain ATCC 204508 / S288c) (Baker's yeast).